A 386-amino-acid polypeptide reads, in one-letter code: Glycerate dehydrogenase HPR, peroxisomal (386 aa).

Residues 175–176 (RI), 271–273 (CSR), and D297 contribute to the NAD(+) site. Residue R273 is part of the active site. Residue E302 is part of the active site. Residue H320 is the Proton donor of the active site. 320–323 (HIAS) contacts NAD(+). The short motif at 384 to 386 (SKL) is the Microbody targeting signal element.

It belongs to the D-isomer specific 2-hydroxyacid dehydrogenase family. As to expression, present in leaves (at protein level). Mostly expressed in photosynthetic tissues such as leaves, stems, flowers, buds, and, to a lower extent, in siliques and roots.

It is found in the peroxisome. It carries out the reaction (R)-glycerate + NAD(+) = 3-hydroxypyruvate + NADH + H(+). The protein operates within photosynthesis; photorespiration; 3-phospho-D-glycerate from glycine: step 3/4. Slightly inhibited by oxalate. Functionally, catalyzes the NADH-dependent reduction of hydroxypyruvate into glycerate in the photorespiratory core cycle. Mediates fatty acid beta-oxidation in germinating seeds when malate dehydrogenase is absent. The sequence is that of Glycerate dehydrogenase HPR, peroxisomal (HPR) from Arabidopsis thaliana (Mouse-ear cress).